Consider the following 460-residue polypeptide: GTPase Der (460 aa).

EngA-type G domains are found at residues 9 to 171 (KTIA…SLNQ) and 199 to 370 (IQVG…ECFS). GTP-binding positions include 15-22 (GQPNVGKS), 62-66 (DTGGM), 123-126 (NKID), 205-212 (GRVNVGKS), 252-256 (DTAGI), and 316-319 (NKWD). The KH-like domain occupies 371 to 455 (RRIPTSLLNS…PLILNAKDKK (85 aa)).

The protein belongs to the TRAFAC class TrmE-Era-EngA-EngB-Septin-like GTPase superfamily. EngA (Der) GTPase family. In terms of assembly, associates with the 50S ribosomal subunit.

In terms of biological role, GTPase that plays an essential role in the late steps of ribosome biogenesis. This Helicobacter pylori (strain G27) protein is GTPase Der.